A 401-amino-acid chain; its full sequence is Multidrug resistance protein MdtH (401 aa).

The next 11 membrane-spanning stretches (helical) occupy residues 13–33 (YFLL…FPLI), 34–54 (SIHF…ALGL), 78–95 (MIVT…FIAL), 99–116 (PWIL…GTLF), 139–159 (LLLM…SWLL), 165–185 (FVCW…ALFL), 214–234 (VLTL…FPII), 243–263 (AAVK…LYPI), 289–309 (FPVG…LFYL), 340–360 (LGLA…YDTG), and 365–385 (IPQL…YALH).

The protein belongs to the major facilitator superfamily. DHA1 family. MdtH (TC 2.A.1.2.21) subfamily.

It is found in the cell inner membrane. The sequence is that of Multidrug resistance protein MdtH from Photorhabdus laumondii subsp. laumondii (strain DSM 15139 / CIP 105565 / TT01) (Photorhabdus luminescens subsp. laumondii).